We begin with the raw amino-acid sequence, 35 residues long: Tamulustoxin (35 aa).

3 disulfides stabilise this stretch: Cys-2-Cys-22, Cys-7-Cys-31, and Cys-11-Cys-33.

In terms of tissue distribution, expressed by the venom gland.

It localises to the secreted. Blocks Kv1.6/KCNA6 potassium channels. The chain is Tamulustoxin from Hottentotta tamulus (Eastern Indian scorpion).